We begin with the raw amino-acid sequence, 524 residues long: Probable glycine dehydrogenase (decarboxylating) subunit 2 (524 aa).

The residue at position 296 (lysine 296) is an N6-(pyridoxal phosphate)lysine.

It belongs to the GcvP family. C-terminal subunit subfamily. As to quaternary structure, the glycine cleavage system is composed of four proteins: P, T, L and H. In this organism, the P 'protein' is a heterodimer of two subunits. The cofactor is pyridoxal 5'-phosphate.

It carries out the reaction N(6)-[(R)-lipoyl]-L-lysyl-[glycine-cleavage complex H protein] + glycine + H(+) = N(6)-[(R)-S(8)-aminomethyldihydrolipoyl]-L-lysyl-[glycine-cleavage complex H protein] + CO2. Functionally, the glycine cleavage system catalyzes the degradation of glycine. The P protein binds the alpha-amino group of glycine through its pyridoxal phosphate cofactor; CO(2) is released and the remaining methylamine moiety is then transferred to the lipoamide cofactor of the H protein. This Caulobacter vibrioides (strain ATCC 19089 / CIP 103742 / CB 15) (Caulobacter crescentus) protein is Probable glycine dehydrogenase (decarboxylating) subunit 2.